A 318-amino-acid chain; its full sequence is Porphobilinogen deaminase (318 aa).

An S-(dipyrrolylmethanemethyl)cysteine modification is found at Cys-248.

It belongs to the HMBS family. As to quaternary structure, monomer. Dipyrromethane is required as a cofactor.

The enzyme catalyses 4 porphobilinogen + H2O = hydroxymethylbilane + 4 NH4(+). Its pathway is porphyrin-containing compound metabolism; protoporphyrin-IX biosynthesis; coproporphyrinogen-III from 5-aminolevulinate: step 2/4. In terms of biological role, tetrapolymerization of the monopyrrole PBG into the hydroxymethylbilane pre-uroporphyrinogen in several discrete steps. The sequence is that of Porphobilinogen deaminase from Caulobacter sp. (strain K31).